The sequence spans 409 residues: Beta-arrestin-2 (409 aa).

Tyr-48 is subject to Phosphotyrosine. Residues Pro-176 and Pro-181 each carry the hydroxyproline; by PHD2 modification. Positions 240–409 (ADICLFSTAQ…KDDDYDDQLC (170 aa)) are interaction with TRAF6. The residue at position 360 (Ser-360) is a Phosphoserine. The segment at 363 to 409 (PETDVPVDTNLIEFDTNYATDDDIVFEDFARLRLKGMKDDDYDDQLC) is interaction with AP2B1. Position 382 is a phosphothreonine (Thr-382). The [DE]-X(1,2)-F-X-X-[FL]-X-X-X-R motif signature appears at 385–395 (DIVFEDFARLR).

It belongs to the arrestin family. Homooligomer; the self-association is mediated by InsP6-binding. Heterooligomer with ARRB1; the association is mediated by InsP6-binding. Interacts with ADRB2 and CHRM2. Interacts with PDE4A. Interacts with PDE4D. Interacts with MAPK10, MAPK1 and MAPK3. Interacts with DRD2. Interacts with FSHR. Interacts with CLTC. Interacts with HTR2C. Interacts with CCR5. Interacts with CXCR4. Interacts with SRC. Interacts with DUSP16; the interaction is interrupted by stimulation of AGTR1 and activation of MAPK10. Interacts with CHUK; the interaction is enhanced stimulation of ADRB2. Interacts with RELA. Interacts with MDM2; the interaction is enhanced by activation of GPCRs. Interacts with SLC9A5. Interacts with TRAF6. Interacts with IGF1R. Interacts with ENG. Interacts with KIR2DL1, KIR2DL3 and KIR2DL4. Interacts with LDLR. Interacts with AP2B1. Interacts with C5AR1. Interacts with RAF1. Interacts with MAP2K1. Interacts with MAPK1. Interacts with MAPK10; the interaction enhances MAPK10 activation by MAP3K5. Interacts with MAP2K4; the interaction is enhanced by presence of MAP3K5 and MAPK10. Interacts with MAP3K5. Interacts with AKT1. Interacts with IKBKB and MAP3K14. Interacts with SMO (activated). Interacts with GSK3A and GSK3B. Associates with protein phosphatase 2A (PP2A). Interacts with DHX8; the interaction is detected in the nucleus upon OR1D2 stimulation. Interacts with GAPDHS; the interaction is detected in the nucleus upon OR1D2 stimulation. Interacts with H2AFX; the interaction is detected in the nucleus upon OR1D2 stimulation. Interacts with KIF14; the interaction is detected in the nucleus upon OR1D2 stimulation. Interacts with RCC1; the interaction is detected in the nucleus upon OR1D2 stimulation. Interacts with CXCR4; the interaction is dependent on C-terminal phosphorylation of CXCR4 and allows activation of MAPK1 and MAPK3. Interacts with GPR143. Interacts with HCK and CXCR1 (phosphorylated). Interacts with ACKR3 and ACKR4. Interacts with ARRDC1; the interaction is direct. Interacts with GPR61, GPR62 and GPR135. Interacts (via NACHT and LRR domains) with NLRP3; this interaction is direct and inducible by omega-3 polyunsaturated fatty acids (PUFAs). Interacts with FFAR4 (via C-terminus); this interaction is stimulated by long-chain fatty acids (LCFAs). Interacts with GPR35. Interacts with GPR84. Interacts with TIGIT; this interaction inhibits the NF-kappa-B pathway. Interacts with TGFBR3. Post-translationally, phosphorylated at Thr-382 in the cytoplasm; probably dephosphorylated at the plasma membrane. The phosphorylation does not regulate internalization and recycling of ADRB2, interaction with clathrin or AP2B1. The ubiquitination status appears to regulate the formation and trafficking of beta-arrestin-GPCR complexes and signaling. Ubiquitination appears to occur GPCR-specific. Ubiquitinated by MDM2; the ubiquitination is required for rapid internalization of ADRB2. Deubiquitinated by USP33; the deubiquitination leads to a dissociation of the beta-arrestin-GPCR complex. Stimulation of a class A GPCR, such as ADRB2, induces transient ubiquitination and subsequently promotes association with USP33. Stimulation of a class B GPCR promotes a sustained ubiquitination. Deubiquitinated by USP20; allowing USP20 to deubiquitinate TRAF6 leading to inhibition of NF-kappa-B signaling. In terms of processing, hydroxylation by PHD2 modulates the rate of internalization by slowing down recruitment to the plasma membrane and inhibiting subsequent co-internalization with class A receptors.

The protein resides in the cytoplasm. It is found in the nucleus. Its subcellular location is the cell membrane. The protein localises to the membrane. It localises to the clathrin-coated pit. The protein resides in the cytoplasmic vesicle. Its function is as follows. Functions in regulating agonist-mediated G-protein coupled receptor (GPCR) signaling by mediating both receptor desensitization and resensitization processes. During homologous desensitization, beta-arrestins bind to the GPRK-phosphorylated receptor and sterically preclude its coupling to the cognate G-protein; the binding appears to require additional receptor determinants exposed only in the active receptor conformation. The beta-arrestins target many receptors for internalization by acting as endocytic adapters (CLASPs, clathrin-associated sorting proteins) and recruiting the GPRCs to the adapter protein 2 complex 2 (AP-2) in clathrin-coated pits (CCPs). However, the extent of beta-arrestin involvement appears to vary significantly depending on the receptor, agonist and cell type. Internalized arrestin-receptor complexes traffic to intracellular endosomes, where they remain uncoupled from G-proteins. Two different modes of arrestin-mediated internalization occur. Class A receptors, like ADRB2, OPRM1, ENDRA, D1AR and ADRA1B dissociate from beta-arrestin at or near the plasma membrane and undergo rapid recycling. Class B receptors, like AVPR2, AGTR1, NTSR1, TRHR and TACR1 internalize as a complex with arrestin and traffic with it to endosomal vesicles, presumably as desensitized receptors, for extended periods of time. Receptor resensitization then requires that receptor-bound arrestin is removed so that the receptor can be dephosphorylated and returned to the plasma membrane. Mediates endocytosis of CCR7 following ligation of CCL19 but not CCL21. Involved in internalization of P2RY1, P2RY4, P2RY6 and P2RY11 and ATP-stimulated internalization of P2RY2. Involved in phosphorylation-dependent internalization of OPRD1 and subsequent recycling or degradation. Involved in ubiquitination of IGF1R. Beta-arrestins function as multivalent adapter proteins that can switch the GPCR from a G-protein signaling mode that transmits short-lived signals from the plasma membrane via small molecule second messengers and ion channels to a beta-arrestin signaling mode that transmits a distinct set of signals that are initiated as the receptor internalizes and transits the intracellular compartment. Acts as a signaling scaffold for MAPK pathways such as MAPK1/3 (ERK1/2) and MAPK10 (JNK3). ERK1/2 and JNK3 activated by the beta-arrestin scaffold are largely excluded from the nucleus and confined to cytoplasmic locations such as endocytic vesicles, also called beta-arrestin signalosomes. Acts as a signaling scaffold for the AKT1 pathway. GPCRs for which the beta-arrestin-mediated signaling relies on both ARRB1 and ARRB2 (codependent regulation) include ADRB2, F2RL1 and PTH1R. For some GPCRs the beta-arrestin-mediated signaling relies on either ARRB1 or ARRB2 and is inhibited by the other respective beta-arrestin form (reciprocal regulation). Increases ERK1/2 signaling in AGTR1- and AVPR2-mediated activation (reciprocal regulation). Involved in CCR7-mediated ERK1/2 signaling involving ligand CCL19. Is involved in type-1A angiotensin II receptor/AGTR1-mediated ERK activity. Is involved in type-1A angiotensin II receptor/AGTR1-mediated MAPK10 activity. Is involved in dopamine-stimulated AKT1 activity in the striatum by disrupting the association of AKT1 with its negative regulator PP2A. Involved in AGTR1-mediated chemotaxis. Appears to function as signaling scaffold involved in regulation of MIP-1-beta-stimulated CCR5-dependent chemotaxis. Involved in attenuation of NF-kappa-B-dependent transcription in response to GPCR or cytokine stimulation by interacting with and stabilizing CHUK. Suppresses UV-induced NF-kappa-B-dependent activation by interacting with CHUK. The function is promoted by stimulation of ADRB2 and dephosphorylation of ARRB2. Involved in p53/TP53-mediated apoptosis by regulating MDM2 and reducing the MDM2-mediated degradation of p53/TP53. May serve as nuclear messenger for GPCRs. Upon stimulation of OR1D2, may be involved in regulation of gene expression during the early processes of fertilization. Also involved in regulation of receptors other than GPCRs. Involved in endocytosis of TGFBR2 and TGFBR3 and down-regulates TGF-beta signaling such as NF-kappa-B activation. Involved in endocytosis of low-density lipoprotein receptor/LDLR. Involved in endocytosis of smoothened homolog/Smo, which also requires GRK2. Involved in endocytosis of SLC9A5. Involved in endocytosis of ENG and subsequent TGF-beta-mediated ERK activation and migration of epithelial cells. Involved in Toll-like receptor and IL-1 receptor signaling through the interaction with TRAF6 which prevents TRAF6 autoubiquitination and oligomerization required for activation of NF-kappa-B and JUN. Involved in insulin resistance by acting as insulin-induced signaling scaffold for SRC, AKT1 and INSR. Involved in regulation of inhibitory signaling of natural killer cells by recruiting PTPN6 and PTPN11 to KIR2DL1. Involved in IL8-mediated granule release in neutrophils. Involved in the internalization of the atypical chemokine receptor ACKR3. Acts as an adapter protein coupling FFAR4 receptor to specific downstream signaling pathways, as well as mediating receptor endocytosis. During the activation step of NLRP3 inflammasome, directly associates with NLRP3 leading to inhibition of pro-inflammatory cytokine release and inhibition of inflammation. In Homo sapiens (Human), this protein is Beta-arrestin-2 (ARRB2).